Here is a 188-residue protein sequence, read N- to C-terminus: Elongation factor P (188 aa).

This sequence belongs to the elongation factor P family.

It is found in the cytoplasm. It functions in the pathway protein biosynthesis; polypeptide chain elongation. Functionally, involved in peptide bond synthesis. Stimulates efficient translation and peptide-bond synthesis on native or reconstituted 70S ribosomes in vitro. Probably functions indirectly by altering the affinity of the ribosome for aminoacyl-tRNA, thus increasing their reactivity as acceptors for peptidyl transferase. This is Elongation factor P from Streptomyces avermitilis (strain ATCC 31267 / DSM 46492 / JCM 5070 / NBRC 14893 / NCIMB 12804 / NRRL 8165 / MA-4680).